Here is a 357-residue protein sequence, read N- to C-terminus: Holliday junction branch migration complex subunit RuvB (357 aa).

Positions 4–195 are large ATPase domain (RuvB-L); sequence TDKLAAKAVS…FGIVARLEFY (192 aa). Residues leucine 34, arginine 35, glycine 76, lysine 79, threonine 80, threonine 81, 142–144, arginine 185, tyrosine 195, and arginine 232 contribute to the ATP site; that span reads EDY. A Mg(2+)-binding site is contributed by threonine 80. The segment at 196–266 is small ATPAse domain (RuvB-S); it reads TPTELARIVT…VADAALAMLD (71 aa). The interval 269–357 is head domain (RuvB-H); the sequence is AVGFDLMDRK…PARDLWDNNA (89 aa). Positions 305, 324, and 329 each coordinate DNA.

It belongs to the RuvB family. Homohexamer. Forms an RuvA(8)-RuvB(12)-Holliday junction (HJ) complex. HJ DNA is sandwiched between 2 RuvA tetramers; dsDNA enters through RuvA and exits via RuvB. An RuvB hexamer assembles on each DNA strand where it exits the tetramer. Each RuvB hexamer is contacted by two RuvA subunits (via domain III) on 2 adjacent RuvB subunits; this complex drives branch migration. In the full resolvosome a probable DNA-RuvA(4)-RuvB(12)-RuvC(2) complex forms which resolves the HJ.

The protein resides in the cytoplasm. It catalyses the reaction ATP + H2O = ADP + phosphate + H(+). Its function is as follows. The RuvA-RuvB-RuvC complex processes Holliday junction (HJ) DNA during genetic recombination and DNA repair, while the RuvA-RuvB complex plays an important role in the rescue of blocked DNA replication forks via replication fork reversal (RFR). RuvA specifically binds to HJ cruciform DNA, conferring on it an open structure. The RuvB hexamer acts as an ATP-dependent pump, pulling dsDNA into and through the RuvAB complex. RuvB forms 2 homohexamers on either side of HJ DNA bound by 1 or 2 RuvA tetramers; 4 subunits per hexamer contact DNA at a time. Coordinated motions by a converter formed by DNA-disengaged RuvB subunits stimulates ATP hydrolysis and nucleotide exchange. Immobilization of the converter enables RuvB to convert the ATP-contained energy into a lever motion, pulling 2 nucleotides of DNA out of the RuvA tetramer per ATP hydrolyzed, thus driving DNA branch migration. The RuvB motors rotate together with the DNA substrate, which together with the progressing nucleotide cycle form the mechanistic basis for DNA recombination by continuous HJ branch migration. Branch migration allows RuvC to scan DNA until it finds its consensus sequence, where it cleaves and resolves cruciform DNA. The chain is Holliday junction branch migration complex subunit RuvB from Ralstonia nicotianae (strain ATCC BAA-1114 / GMI1000) (Ralstonia solanacearum).